Reading from the N-terminus, the 171-residue chain is uncharacterized protein (171 aa).

In terms of biological role, required for production of the bacteriocin SkfA. This is an uncharacterized protein from Bacillus subtilis (strain 168).